The following is a 301-amino-acid chain: MTLERDAASNVAKVLSEALPYIRRFVGKTLVIKYGGNAMESEELKTGFARDIVLMKAVGINPVVVHGGGPQIGDLLKRLSIESHFIDGMRVTDAQTMDVVEMVLGGQVNKDIVNLINRHGGSAIGLTGKDAELIRAKKLTVTRQTPEMTKPEIIDIGQVGEVVGVNTGLLNMLVKGDFIPVIAPIGVGPDGESYNINADLVAGKVAEALKAEKLILLTNIAGLMNKQGEVLTGLTTEQVDGLIADGTIYGGMLPKIRCALEAVQGGVNSSHIIDGRVPNAVLLEIFTDSGVGTQITNRKRH.

Residues 68–69 (GG), arginine 90, and asparagine 195 contribute to the substrate site.

The protein belongs to the acetylglutamate kinase family. ArgB subfamily.

It localises to the cytoplasm. It catalyses the reaction N-acetyl-L-glutamate + ATP = N-acetyl-L-glutamyl 5-phosphate + ADP. Its pathway is amino-acid biosynthesis; L-arginine biosynthesis; N(2)-acetyl-L-ornithine from L-glutamate: step 2/4. Catalyzes the ATP-dependent phosphorylation of N-acetyl-L-glutamate. The sequence is that of Acetylglutamate kinase from Pseudomonas savastanoi pv. phaseolicola (strain 1448A / Race 6) (Pseudomonas syringae pv. phaseolicola (strain 1448A / Race 6)).